A 144-amino-acid polypeptide reads, in one-letter code: Ribosomal RNA large subunit methyltransferase H (144 aa).

S-adenosyl-L-methionine contacts are provided by residues leucine 68, glycine 96, and 112 to 117 (FSKLTF).

The protein belongs to the RNA methyltransferase RlmH family. In terms of assembly, homodimer.

Its subcellular location is the cytoplasm. It carries out the reaction pseudouridine(1915) in 23S rRNA + S-adenosyl-L-methionine = N(3)-methylpseudouridine(1915) in 23S rRNA + S-adenosyl-L-homocysteine + H(+). Its function is as follows. Specifically methylates the pseudouridine at position 1915 (m3Psi1915) in 23S rRNA. This is Ribosomal RNA large subunit methyltransferase H from Mycoplasmopsis synoviae (strain 53) (Mycoplasma synoviae).